The following is a 361-amino-acid chain: Protein RecA (361 aa).

77 to 84 (GPESSGKT) serves as a coordination point for ATP.

Belongs to the RecA family.

Its subcellular location is the cytoplasm. Can catalyze the hydrolysis of ATP in the presence of single-stranded DNA, the ATP-dependent uptake of single-stranded DNA by duplex DNA, and the ATP-dependent hybridization of homologous single-stranded DNAs. It interacts with LexA causing its activation and leading to its autocatalytic cleavage. This Rhizobium etli protein is Protein RecA.